Consider the following 160-residue polypeptide: Cyclic pyranopterin monophosphate synthase (160 aa).

Residues 75–77 (LCH) and 113–114 (ME) each bind substrate. D128 is a catalytic residue.

It belongs to the MoaC family. In terms of assembly, homohexamer; trimer of dimers.

It carries out the reaction (8S)-3',8-cyclo-7,8-dihydroguanosine 5'-triphosphate = cyclic pyranopterin phosphate + diphosphate. The protein operates within cofactor biosynthesis; molybdopterin biosynthesis. Its function is as follows. Catalyzes the conversion of (8S)-3',8-cyclo-7,8-dihydroguanosine 5'-triphosphate to cyclic pyranopterin monophosphate (cPMP). The chain is Cyclic pyranopterin monophosphate synthase from Haemophilus influenzae (strain PittEE).